Reading from the N-terminus, the 363-residue chain is Trichothecene biosynthesis protein 14 (363 aa).

The protein belongs to the TRI14 family.

In terms of biological role, part of the gene cluster that mediates the production of the antimicrobial trichothecene harzianum A (HA) that plays a role in Botrytis cinerea antagonistic activity and plant defense priming. The biosynthesis of harzianum A begins with the cyclization of farnesyl diphosphate to trichodiene and is catalyzed by the trichodiene synthase TRI5. Trichodiene undergoes a series of oxygenations catalyzed by the cytochrome P450 monooxygenase TRI4. TRI4 controls the addition of 3 oxygens at C-2, C-11, and the C-12, C-13-epoxide to form the intermediate isotrichodiol. Isotrichodiol then undergoes a non-enzymatic isomerization and cyclization to form 12,13-epoxytrichothec-9-ene (EPT) which is further converted to trichodermol by the cytochrome P450 monooxygenase TRI11 via C-4 hydroxylation. The last step of HA synthesis is esterification of an octatriendioyl moiety to the C-4 oxygen of trichodermol. The octatriendioyl moiety is probably produced by the polyketide synthase TRI17 and the esterification performed by the trichothecene O-acetyltransferase TRI3. This is Trichothecene biosynthesis protein 14 from Trichoderma arundinaceum.